Reading from the N-terminus, the 85-residue chain is Large ribosomal subunit protein bL31B (85 aa).

It belongs to the bacterial ribosomal protein bL31 family. Type B subfamily. Part of the 50S ribosomal subunit.

This Vibrio cholerae serotype O1 (strain ATCC 39541 / Classical Ogawa 395 / O395) protein is Large ribosomal subunit protein bL31B.